Here is a 175-residue protein sequence, read N- to C-terminus: CDP-archaeol synthase (175 aa).

4 helical membrane passes run 41 to 61 (GLFS…WLSF), 82 to 102 (LIVV…KSFF), 122 to 142 (FVVG…VSNF), and 150 to 170 (VIII…FIGV).

Belongs to the CDP-archaeol synthase family. Mg(2+) serves as cofactor.

The protein localises to the cell membrane. The enzyme catalyses 2,3-bis-O-(geranylgeranyl)-sn-glycerol 1-phosphate + CTP + H(+) = CDP-2,3-bis-O-(geranylgeranyl)-sn-glycerol + diphosphate. Its pathway is membrane lipid metabolism; glycerophospholipid metabolism. Catalyzes the formation of CDP-2,3-bis-(O-geranylgeranyl)-sn-glycerol (CDP-archaeol) from 2,3-bis-(O-geranylgeranyl)-sn-glycerol 1-phosphate (DGGGP) and CTP. This reaction is the third ether-bond-formation step in the biosynthesis of archaeal membrane lipids. The polypeptide is CDP-archaeol synthase (Methanosarcina mazei (strain ATCC BAA-159 / DSM 3647 / Goe1 / Go1 / JCM 11833 / OCM 88) (Methanosarcina frisia)).